The primary structure comprises 269 residues: Shikimate dehydrogenase (NADP(+)) (269 aa).

Shikimate contacts are provided by residues 22-24 and T68; that span reads TLS. K72 serves as the catalytic Proton acceptor. Residues N93 and D104 each coordinate shikimate. NADP(+)-binding positions include 128–132, 152–157, and F210; these read GAGGA and NRTKSR. Y212 is a shikimate binding site. Residue G233 coordinates NADP(+).

This sequence belongs to the shikimate dehydrogenase family. Homodimer.

The enzyme catalyses shikimate + NADP(+) = 3-dehydroshikimate + NADPH + H(+). The protein operates within metabolic intermediate biosynthesis; chorismate biosynthesis; chorismate from D-erythrose 4-phosphate and phosphoenolpyruvate: step 4/7. In terms of biological role, involved in the biosynthesis of the chorismate, which leads to the biosynthesis of aromatic amino acids. Catalyzes the reversible NADPH linked reduction of 3-dehydroshikimate (DHSA) to yield shikimate (SA). The sequence is that of Shikimate dehydrogenase (NADP(+)) from Saccharolobus solfataricus (strain ATCC 35092 / DSM 1617 / JCM 11322 / P2) (Sulfolobus solfataricus).